Consider the following 253-residue polypeptide: Tetraspanin-11 (253 aa).

A run of 4 helical transmembrane segments spans residues Leu19–Val39, Ile63–Ile83, Leu90–Leu110, and Leu220–Leu240.

It belongs to the tetraspanin (TM4SF) family.

It is found in the membrane. This chain is Tetraspanin-11 (TSPAN11), found in Bos taurus (Bovine).